A 430-amino-acid chain; its full sequence is Adenylosuccinate synthetase (430 aa).

GTP contacts are provided by residues 13 to 19 (GDEGKGK) and 41 to 43 (GHT). Asp-14 serves as the catalytic Proton acceptor. Residues Asp-14 and Gly-41 each contribute to the Mg(2+) site. Residues 14-17 (DEGK), 39-42 (NAGH), Thr-130, Arg-144, Gln-225, Thr-240, and Arg-304 each bind IMP. His-42 (proton donor) is an active-site residue. Substrate is bound at residue 300 to 306 (ASTGRPR). Residues Arg-306, 332 to 334 (KLD), and 414 to 416 (STG) each bind GTP.

The protein belongs to the adenylosuccinate synthetase family. As to quaternary structure, homodimer. The cofactor is Mg(2+).

It is found in the cytoplasm. It carries out the reaction IMP + L-aspartate + GTP = N(6)-(1,2-dicarboxyethyl)-AMP + GDP + phosphate + 2 H(+). It functions in the pathway purine metabolism; AMP biosynthesis via de novo pathway; AMP from IMP: step 1/2. In terms of biological role, plays an important role in the de novo pathway of purine nucleotide biosynthesis. Catalyzes the first committed step in the biosynthesis of AMP from IMP. This is Adenylosuccinate synthetase from Xanthomonas oryzae pv. oryzae (strain PXO99A).